The primary structure comprises 127 residues: E3 ubiquitin-protein ligase PPP1R11 (127 aa).

Disordered stretches follow at residues 1–55 and 70–127; these read MAEA…EHMG and AFGE…PMQH. The residue at position 2 (alanine 2) is an N-acetylalanine. Positions 11-23 are enriched in low complexity; that stretch reads ETVTETTVTVTTE. The segment covering 40–55 has biased composition (basic and acidic residues); that stretch reads KKVEWSSDTVDNEHMG. The interval 53–63 is atypical RING finger domain 1; sequence HMGRRSSKCCC. Serine 74 and serine 75 each carry phosphoserine. Threonine 76 bears the Phosphothreonine mark. Phosphoserine is present on serine 78. The interval 86 to 95 is atypical RING finger domain 2; it reads CGHTHCVRGH. The span at 90–100 shows a compositional bias: basic residues; it reads HCVRGHRKGRR. Residues 103–127 show a composition bias toward pro residues; it reads TPGPTPTTPPQPPDPSQPPPGPMQH. Threonine 110 carries the post-translational modification Phosphothreonine.

In terms of assembly, interacts with TLR2 and UBE2D2. Auto-ubiquitinated.

The catalysed reaction is S-ubiquitinyl-[E2 ubiquitin-conjugating enzyme]-L-cysteine + [acceptor protein]-L-lysine = [E2 ubiquitin-conjugating enzyme]-L-cysteine + N(6)-ubiquitinyl-[acceptor protein]-L-lysine.. The protein operates within protein modification; protein ubiquitination. Functionally, atypical E3 ubiquitin-protein ligase which ubiquitinates TLR2 at 'Lys-754' leading to its degradation by the proteasome. Plays a role in regulating inflammatory cytokine release and gram-positive bacterial clearance by functioning, in part, through the ubiquitination and degradation of TLR2. Inhibitor of protein phosphatase 1. This Rattus norvegicus (Rat) protein is E3 ubiquitin-protein ligase PPP1R11 (Ppp1r11).